The following is a 427-amino-acid chain: Glutamate-1-semialdehyde 2,1-aminomutase (427 aa).

K265 carries the post-translational modification N6-(pyridoxal phosphate)lysine.

Belongs to the class-III pyridoxal-phosphate-dependent aminotransferase family. HemL subfamily. In terms of assembly, homodimer. The cofactor is pyridoxal 5'-phosphate.

The protein resides in the cytoplasm. It carries out the reaction (S)-4-amino-5-oxopentanoate = 5-aminolevulinate. It functions in the pathway porphyrin-containing compound metabolism; protoporphyrin-IX biosynthesis; 5-aminolevulinate from L-glutamyl-tRNA(Glu): step 2/2. The sequence is that of Glutamate-1-semialdehyde 2,1-aminomutase from Mannheimia succiniciproducens (strain KCTC 0769BP / MBEL55E).